The following is a 429-amino-acid chain: Enolase (429 aa).

Residue Gln-162 coordinates (2R)-2-phosphoglycerate. Glu-204 acts as the Proton donor in catalysis. Mg(2+) is bound by residues Asp-241, Glu-283, and Asp-310. Residues Lys-335, Arg-364, Ser-365, and Lys-386 each coordinate (2R)-2-phosphoglycerate. Lys-335 functions as the Proton acceptor in the catalytic mechanism.

The protein belongs to the enolase family. Mg(2+) serves as cofactor.

Its subcellular location is the cytoplasm. It is found in the secreted. The protein resides in the cell surface. The enzyme catalyses (2R)-2-phosphoglycerate = phosphoenolpyruvate + H2O. The protein operates within carbohydrate degradation; glycolysis; pyruvate from D-glyceraldehyde 3-phosphate: step 4/5. Its function is as follows. Catalyzes the reversible conversion of 2-phosphoglycerate (2-PG) into phosphoenolpyruvate (PEP). It is essential for the degradation of carbohydrates via glycolysis. This is Enolase from Mycobacterium leprae (strain TN).